The chain runs to 120 residues: Glutamate--tRNA ligase (120 aa).

It belongs to the class-I aminoacyl-tRNA synthetase family. Glutamate--tRNA ligase type 1 subfamily. In terms of assembly, monomer.

It localises to the cytoplasm. The enzyme catalyses tRNA(Glu) + L-glutamate + ATP = L-glutamyl-tRNA(Glu) + AMP + diphosphate. Catalyzes the attachment of glutamate to tRNA(Glu) in a two-step reaction: glutamate is first activated by ATP to form Glu-AMP and then transferred to the acceptor end of tRNA(Glu). The polypeptide is Glutamate--tRNA ligase (gltX) (Staphylococcus xylosus).